Reading from the N-terminus, the 124-residue chain is Translation initiation factor 5A (124 aa).

Lys36 bears the Hypusine mark.

This sequence belongs to the eIF-5A family.

It is found in the cytoplasm. In terms of biological role, functions by promoting the formation of the first peptide bond. The protein is Translation initiation factor 5A of Haloquadratum walsbyi (strain DSM 16790 / HBSQ001).